The following is a 592-amino-acid chain: Proline--tRNA ligase (592 aa).

The protein belongs to the class-II aminoacyl-tRNA synthetase family. ProS type 1 subfamily. Homodimer.

Its subcellular location is the cytoplasm. It carries out the reaction tRNA(Pro) + L-proline + ATP = L-prolyl-tRNA(Pro) + AMP + diphosphate. Functionally, catalyzes the attachment of proline to tRNA(Pro) in a two-step reaction: proline is first activated by ATP to form Pro-AMP and then transferred to the acceptor end of tRNA(Pro). As ProRS can inadvertently accommodate and process non-cognate amino acids such as alanine and cysteine, to avoid such errors it has two additional distinct editing activities against alanine. One activity is designated as 'pretransfer' editing and involves the tRNA(Pro)-independent hydrolysis of activated Ala-AMP. The other activity is designated 'posttransfer' editing and involves deacylation of mischarged Ala-tRNA(Pro). The misacylated Cys-tRNA(Pro) is not edited by ProRS. The polypeptide is Proline--tRNA ligase (Corynebacterium urealyticum (strain ATCC 43042 / DSM 7109)).